The primary structure comprises 256 residues: Small ribosomal subunit protein eS1 (256 aa).

A compositionally biased stretch (basic residues) spans 1–18 (MAVGKNKRLSKGKKGVKK). Residues 1 to 20 (MAVGKNKRLSKGKKGVKKRT) form a disordered region. The residue at position 2 (A2) is an N-acetylalanine; partial.

This sequence belongs to the eukaryotic ribosomal protein eS1 family. In terms of assembly, component of the small ribosomal subunit. Mature ribosomes consist of a small (40S) and a large (60S) subunit. The 40S subunit contains about 33 different proteins and 1 molecule of RNA (18S). The 60S subunit contains about 49 different proteins and 3 molecules of RNA (25S, 5.8S and 5S).

It is found in the cytoplasm. This Aspergillus clavatus (strain ATCC 1007 / CBS 513.65 / DSM 816 / NCTC 3887 / NRRL 1 / QM 1276 / 107) protein is Small ribosomal subunit protein eS1 (rps1).